Consider the following 209-residue polypeptide: MIGLVGKKVGMTRIFTEDGVSIPVTVIEVEANRVTQVKDLANDGYRAVQVTTGAKKANRVTKPEAGHFAKAGVEAGRGLWEFRLAEGEEYTVGQSISVELFADVKKVDVTGTSKGKGFAGTVKRWNFRTQDATHGNSLSHRVPGSIGQNQTPGKVFKGKKMAGQMGNERVTVQSLDVVRVDAERNLLLVKGGVPGATGCDLIVKPAVKA.

Gln-150 is modified (N5-methylglutamine).

It belongs to the universal ribosomal protein uL3 family. Part of the 50S ribosomal subunit. Forms a cluster with proteins L14 and L19. Post-translationally, methylated by PrmB.

Functionally, one of the primary rRNA binding proteins, it binds directly near the 3'-end of the 23S rRNA, where it nucleates assembly of the 50S subunit. This Salmonella paratyphi C (strain RKS4594) protein is Large ribosomal subunit protein uL3.